The primary structure comprises 209 residues: Nascent polypeptide-associated complex subunit alpha-like protein 5 (209 aa).

The disordered stretch occupies residues 23–71; the sequence is EKEDDVVVEDVKDGEEEDDDEDDEDVEVEGEGGNENAKQSRSEKKSRKA. Positions 25-54 are enriched in acidic residues; the sequence is EDDVVVEDVKDGEEEDDDEDDEDVEVEGEG. The NAC-A/B domain occupies 62-127; it reads SRSEKKSRKA…AKVDDLSSQL (66 aa). A UBA domain is found at 170-207; sequence VEARDIDLVMTQAGVSKAKAVSALKANDGDIVSAIMEL.

The protein belongs to the NAC-alpha family.

Functionally, may promote appropriate targeting of ribosome-nascent polypeptide complexes. The chain is Nascent polypeptide-associated complex subunit alpha-like protein 5 from Arabidopsis thaliana (Mouse-ear cress).